A 552-amino-acid polypeptide reads, in one-letter code: Leucine-rich repeat-containing protein 31 (552 aa).

The tract at residues 1-65 (MSQTRKKTSS…SETAKPLSSE (65 aa)) is disordered. Basic and acidic residues predominate over residues 31 to 41 (ESRKEDNDLKT). Residues 42–58 (SDSQPSDWIQKTATSET) are compositionally biased toward polar residues. 9 LRR repeats span residues 227-246 (SLEV…LNSI), 255-275 (NLKV…KILD), 283-293 (ELRKLDLSCNK), 311-331 (HLQV…MSLT), 339-360 (NLQE…NLLS), 367-387 (ALKS…TALA), 395-415 (ALEV…KLLL), 423-443 (SLQV…ALLA), and 453-475 (KLQK…MFCQ).

This chain is Leucine-rich repeat-containing protein 31 (LRRC31), found in Homo sapiens (Human).